Here is a 253-residue protein sequence, read N- to C-terminus: 5'-nucleotidase SurE (253 aa).

Residues Asp8, Asp9, Ser39, and Asn95 each coordinate a divalent metal cation.

The protein belongs to the SurE nucleotidase family. The cofactor is a divalent metal cation.

The protein localises to the cytoplasm. It catalyses the reaction a ribonucleoside 5'-phosphate + H2O = a ribonucleoside + phosphate. In terms of biological role, nucleotidase that shows phosphatase activity on nucleoside 5'-monophosphates. The protein is 5'-nucleotidase SurE of Kosmotoga olearia (strain ATCC BAA-1733 / DSM 21960 / TBF 19.5.1).